Here is a 338-residue protein sequence, read N- to C-terminus: Lipopolysaccharide 1,2-glucosyltransferase (338 aa).

Residues 33–38 (GVDANY) and 130–131 (DA) each bind UDP. The Mg(2+) site is built by Asp130 and Asp132. Short sequence motifs (DXD) lie at residues 130–132 (DAD) and 215–217 (DQD). His264 provides a ligand contact to Mg(2+). 264-270 (HYTGATK) lines the UDP pocket.

Belongs to the glycosyltransferase 8 family. Mg(2+) serves as cofactor.

It is found in the cell inner membrane. The catalysed reaction is UDP-glucose + [lipopolysaccharide] = UDP + D-glucosyl-[lipopolysaccharide].. It carries out the reaction alpha-D-Glc-(1-&gt;3)-[alpha-D-Gal-(1-&gt;6)]-alpha-D-Glc-(1-&gt;3)-[L-alpha-D-Hep-(1-&gt;7)]-4-O-PO3(2-)-L-alpha-D-Hep-(1-&gt;3)-4-O-PO3(2-)-L-alpha-D-Hep-(1-&gt;5)-[alpha-Kdo-(2-&gt;4)]-alpha-Kdo-(2-&gt;6)-lipid A + UDP-alpha-D-glucose = alpha-D-Glc-(1-&gt;2)-alpha-D-Glc-(1-&gt;3)-[alpha-D-Gal-(1-&gt;6)]-alpha-D-Glc-(1-&gt;3)-[L-alpha-D-Hep-(1-&gt;7)]-4-O-PO3(2-)-L-alpha-D-Hep-(1-&gt;3)-4-O-PO3(2-)-L-alpha-D-Hep-(1-&gt;5)-[alpha-Kdo-(2-&gt;4)]-alpha-Kdo-(2-&gt;6)-lipid A + UDP + H(+). The protein operates within bacterial outer membrane biogenesis; LPS core biosynthesis. In terms of biological role, glucosyltransferase involved in the biosynthesis of the core oligosaccharide region of lipopolysaccharide (LPS). Catalyzes the addition of a glucose (glucose III) to the outer-core glucose II. This Escherichia coli (strain K12) protein is Lipopolysaccharide 1,2-glucosyltransferase.